The sequence spans 235 residues: Sugar fermentation stimulation protein homolog (235 aa).

It belongs to the SfsA family.

This is Sugar fermentation stimulation protein homolog from Pseudomonas aeruginosa (strain LESB58).